The primary structure comprises 402 residues: uncharacterized protein (402 aa).

A run of 12 helical transmembrane segments spans residues 11 to 31 (LALA…IDMY), 48 to 68 (LVQL…LIVG), 80 to 100 (LLIC…SPNI), 108 to 125 (FLQG…RAIV), 140 to 160 (LLMV…GAIL), 167 to 187 (WHTI…LIAL), 219 to 239 (FMGY…YVSG), 254 to 274 (VFSI…FIIG), 286 to 306 (LRIA…MTMI), 308 to 328 (GPLA…GMVL), 347 to 367 (SALL…LVGI), and 373 to 393 (VPMG…FFGL).

This sequence belongs to the major facilitator superfamily. Bcr/CmlA family.

Its subcellular location is the cell membrane. This is an uncharacterized protein from Bacillus subtilis (strain 168).